Consider the following 119-residue polypeptide: MVQDATADGVMDASDACCAPPGNVDSDAMATDLQVLSAMGNDTRYELLRRIANADDGVCVCDLEATVGVSQSAVSQALSRLYTAGLVTRRKEGSWRYYEPTETTEVLLETLDDLRGNHE.

In terms of domain architecture, HTH arsR-type spans 24–119; that stretch reads VDSDAMATDL…TLDDLRGNHE (96 aa). Positions 60 to 83 form a DNA-binding region, H-T-H motif; it reads VCDLEATVGVSQSAVSQALSRLYT.

Functionally, transcriptional repressor for the arsR2M operon. This Halobacterium salinarum (strain ATCC 700922 / JCM 11081 / NRC-1) (Halobacterium halobium) protein is Putative arsenical resistance operon repressor ArsR2 (arsR2).